Reading from the N-terminus, the 414-residue chain is Serine/threonine transporter SstT (414 aa).

Residues 2–15 are Cytoplasmic-facing; the sequence is TTQRSPGLFRRLAH. The chain crosses the membrane as a helical span at residues 16-36; that stretch reads GSLVKQILVGLVLGILLAWIS. At 37–45 the chain is on the periplasmic side; sequence KPAAEAVGL. Residues 46–66 traverse the membrane as a helical segment; that stretch reads LGTLFVGALKAVAPILVLMLV. The Cytoplasmic portion of the chain corresponds to 67–83; it reads MASIANHQHGQKTNIRP. Residues 84–104 form a helical membrane-spanning segment; sequence ILFLYLLGTFSAALAAVVFSF. Over 105-142 the chain is Periplasmic; that stretch reads AFPSTLHLSSSAGDISPPSGIVEVMRGLVMSMVSNPID. The helical transmembrane segment at 143–163 threads the bilayer; the sequence is ALLKGNYIGILVWAIGLGFAL. The Cytoplasmic segment spans residues 164–179; that stretch reads RHGNETTKNLVNDMSN. A helical membrane pass occupies residues 180–200; the sequence is AVTFMVKLVIRFAPIGIFGLV. Residues 201-217 lie on the Periplasmic side of the membrane; the sequence is SSTLATTGFSTLWGYAQ. The helical transmembrane segment at 218-238 threads the bilayer; sequence LLVVLVGCMLLVALVVNPLLV. Over 239–299 the chain is Cytoplasmic; sequence WWKIRRNPFP…VSIPLGATIN (61 aa). The helical transmembrane segment at 300–320 threads the bilayer; that stretch reads MAGAAITITVLTLAAVNTLGI. The Periplasmic segment spans residues 321–331; sequence PVDLPTALLLS. Residues 332–352 form a helical membrane-spanning segment; that stretch reads VVASLCACGASGVAGGSLLLI. Residues 353–414 lie on the Cytoplasmic side of the membrane; it reads PLACNMFGIS…DRLANSALRN (62 aa).

It belongs to the dicarboxylate/amino acid:cation symporter (DAACS) (TC 2.A.23) family.

It localises to the cell inner membrane. It catalyses the reaction L-serine(in) + Na(+)(in) = L-serine(out) + Na(+)(out). It carries out the reaction L-threonine(in) + Na(+)(in) = L-threonine(out) + Na(+)(out). Involved in the import of serine and threonine into the cell, with the concomitant import of sodium (symport system). The chain is Serine/threonine transporter SstT from Shigella flexneri serotype 5b (strain 8401).